Consider the following 189-residue polypeptide: GTP cyclohydrolase 1 (189 aa).

Zn(2+) is bound by residues cysteine 76, histidine 79, and cysteine 149.

The protein belongs to the GTP cyclohydrolase I family. In terms of assembly, homomer.

It carries out the reaction GTP + H2O = 7,8-dihydroneopterin 3'-triphosphate + formate + H(+). It functions in the pathway cofactor biosynthesis; 7,8-dihydroneopterin triphosphate biosynthesis; 7,8-dihydroneopterin triphosphate from GTP: step 1/1. This is GTP cyclohydrolase 1 from Dehalococcoides mccartyi (strain ATCC BAA-2100 / JCM 16839 / KCTC 5957 / BAV1).